The chain runs to 148 residues: uncharacterized protein (148 aa).

Positions 4–65 (MDKVDLQLIK…IPNLEKLNYM (62 aa)) constitute an HTH asnC-type domain. The segment at residues 23–42 (YRELAEMLGTTRQRVARKVD) is a DNA-binding region (H-T-H motif).

This is an uncharacterized protein from Pyrococcus furiosus (strain ATCC 43587 / DSM 3638 / JCM 8422 / Vc1).